Reading from the N-terminus, the 86-residue chain is MANHKSSIKRIRQTIVRSERNRFYRTRLKNIVKDVRSAITAGNKEEAASAMGVANKQIQKFVSKGVLKKETAARKISRLHRAVNAI.

Belongs to the bacterial ribosomal protein bS20 family.

In terms of biological role, binds directly to 16S ribosomal RNA. The sequence is that of Small ribosomal subunit protein bS20 from Sulfurimonas denitrificans (strain ATCC 33889 / DSM 1251) (Thiomicrospira denitrificans (strain ATCC 33889 / DSM 1251)).